A 90-amino-acid polypeptide reads, in one-letter code: PIK3R3 upstream open reading frame protein (90 aa).

Positions 1-63 (MGPSQLVRAP…PASEATNISD (63 aa)) are disordered. Basic residues predominate over residues 27–46 (PRRRCPSMFKCSRRTYRQKP). The span at 50–63 (TATNPASEATNISD) shows a compositional bias: polar residues.

In Mus musculus (Mouse), this protein is PIK3R3 upstream open reading frame protein.